We begin with the raw amino-acid sequence, 297 residues long: MAFQECVIEVAQDQAEAWSDALFDLGALSVSVEDADADTPDEQPLFGEPGLEPKQLAWNRSRVVALFGDDADPAVVVAAAANQLGIDPVPPYQLRAVEDQDWVRLTQSQFEPIRVGERIWVVPSWHDAPEPDAVVLELDPGLAFGTGSHPTTRLCMQWLEQNLTPGETVLDYGCGSGILAIVARKLGAGDTVGIDIDPNAVEASRYNAERNHVEASFALPESVSDASYDLVVANILSNPLKLMAAMLSARVRAGGRLVLSGVLERQAEEVAAAYAPWLPLTVWRSEEGWVCLHGTRP.

S-adenosyl-L-methionine is bound by residues threonine 152, glycine 173, aspartate 195, and asparagine 234.

Belongs to the methyltransferase superfamily. PrmA family.

The protein resides in the cytoplasm. It catalyses the reaction L-lysyl-[protein] + 3 S-adenosyl-L-methionine = N(6),N(6),N(6)-trimethyl-L-lysyl-[protein] + 3 S-adenosyl-L-homocysteine + 3 H(+). Functionally, methylates ribosomal protein L11. The sequence is that of Ribosomal protein L11 methyltransferase from Cupriavidus taiwanensis (strain DSM 17343 / BCRC 17206 / CCUG 44338 / CIP 107171 / LMG 19424 / R1) (Ralstonia taiwanensis (strain LMG 19424)).